A 144-amino-acid polypeptide reads, in one-letter code: Maximins 10/H3 (144 aa).

The signal sequence occupies residues 1 to 18; the sequence is MNFKYIVAVSFLIASAYA. The propeptide occupies 19–43; sequence RSVKNDEQSLSQRDVLDEESLREFR. The residue at position 70 (Ser70) is a Serine amide. Positions 74-123 are excised as a propeptide; the sequence is TAEDHEVMKRLEAVMRDLDSLDYPEEATERETRGFNQEEIANLFTKKEKR. At Ile143 the chain carries Isoleucine amide.

Belongs to the bombinin family. Expressed by the skin glands.

The protein localises to the secreted. In terms of biological role, maximin-10 shows antimicrobial activity against bacteria and against the fungus C.albicans. It has little hemolytic activity. Maximin-H3 shows antibacterial activity against both Gram-positive and Gram-negative bacteria. It also shows antimicrobial activity against the fungus C.albicans. Shows strong hemolytic activity. This Bombina maxima (Giant fire-bellied toad) protein is Maximins 10/H3.